A 330-amino-acid polypeptide reads, in one-letter code: Flotillin-like protein FloA (330 aa).

A run of 2 helical transmembrane segments spans residues 6 to 26 (LFLL…FTFV) and 28 to 48 (VMLW…TLIG).

Belongs to the flotillin-like FloA family. As to quaternary structure, homooligomerizes.

It localises to the cell membrane. The protein localises to the membrane raft. Its function is as follows. Found in functional membrane microdomains (FMM) that may be equivalent to eukaryotic membrane rafts. FMMs are highly dynamic and increase in number as cells age. Flotillins are thought to be important factors in membrane fluidity. The chain is Flotillin-like protein FloA from Bacillus licheniformis (strain ATCC 14580 / DSM 13 / JCM 2505 / CCUG 7422 / NBRC 12200 / NCIMB 9375 / NCTC 10341 / NRRL NRS-1264 / Gibson 46).